The primary structure comprises 495 residues: Ectonucleoside triphosphate diphosphohydrolase 2 (495 aa).

Residues 2-4 lie on the Cytoplasmic side of the membrane; that stretch reads ARR. A helical membrane pass occupies residues 5–25; it reads AAAVLLLLALGCLLGILLLCL. The Extracellular portion of the chain corresponds to 26 to 465; the sequence is GSGDARGPPS…SHRSMLYNYW (440 aa). N-linked (GlcNAc...) asparagine glycosylation occurs at Asn-62. Cys-73 and Cys-97 form a disulfide bridge. Glu-162 serves as the catalytic Proton acceptor. Residue 201–205 participates in ATP binding; the sequence is GASTQ. Disulfide bonds link Cys-239-Cys-286, Cys-267-Cys-311, Cys-324-Cys-329, and Cys-378-Cys-400. N-linked (GlcNAc...) asparagine glycosylation occurs at Asn-297. N-linked (GlcNAc...) asparagine glycosylation is found at Asn-418 and Asn-444. A helical transmembrane segment spans residues 466-486; sequence VILILLFVITTLTALLTAVYL. The Cytoplasmic portion of the chain corresponds to 487-495; that stretch reads LRRSKSSTI.

Belongs to the GDA1/CD39 NTPase family. Ca(2+) is required as a cofactor. Requires Mg(2+) as cofactor.

The protein localises to the membrane. Functionally, in the nervous system, could hydrolyze ATP and other nucleotides to regulate purinergic neurotransmission. Hydrolyzes ADP only to a marginal extent. In Gallus gallus (Chicken), this protein is Ectonucleoside triphosphate diphosphohydrolase 2 (ENTPD2).